Here is a 687-residue protein sequence, read N- to C-terminus: Protein SDA1 homolog (687 aa).

Disordered regions lie at residues S517–R549, M561–G587, and T615–I687. The span at E520 to D537 shows a compositional bias: acidic residues. Positions E644 to R666 are enriched in basic residues. The span at S667–L680 shows a compositional bias: basic and acidic residues.

This sequence belongs to the SDA1 family.

The protein localises to the nucleus. The protein resides in the nucleolus. In terms of biological role, required for 60S pre-ribosomal subunits export to the cytoplasm. This is Protein SDA1 homolog (sdad1) from Nematostella vectensis (Starlet sea anemone).